The primary structure comprises 213 residues: LexA repressor (213 aa).

The segment at residues 29 to 49 (RAEIAQALGFRSPNAAEDHLK) is a DNA-binding region (H-T-H motif). Catalysis depends on for autocatalytic cleavage activity residues serine 131 and lysine 168.

Belongs to the peptidase S24 family. As to quaternary structure, homodimer.

It catalyses the reaction Hydrolysis of Ala-|-Gly bond in repressor LexA.. Functionally, represses a number of genes involved in the response to DNA damage (SOS response), including recA and lexA. In the presence of single-stranded DNA, RecA interacts with LexA causing an autocatalytic cleavage which disrupts the DNA-binding part of LexA, leading to derepression of the SOS regulon and eventually DNA repair. This is LexA repressor from Bordetella avium (strain 197N).